A 670-amino-acid polypeptide reads, in one-letter code: Methionine--tRNA ligase (670 aa).

The 'HIGH' region signature appears at 14–24 (PYANGHLHLGH). Zn(2+) is bound by residues Cys145, Cys148, Cys158, and Cys161. A 'KMSKS' region motif is present at residues 330-334 (KMSKS). Lys333 is an ATP binding site. Residues 570–670 (DFAKVDLRIA…AGALPGMKVK (101 aa)) form the tRNA-binding domain.

It belongs to the class-I aminoacyl-tRNA synthetase family. MetG type 1 subfamily. Homodimer. Zn(2+) is required as a cofactor.

It is found in the cytoplasm. The catalysed reaction is tRNA(Met) + L-methionine + ATP = L-methionyl-tRNA(Met) + AMP + diphosphate. In terms of biological role, is required not only for elongation of protein synthesis but also for the initiation of all mRNA translation through initiator tRNA(fMet) aminoacylation. This chain is Methionine--tRNA ligase, found in Legionella pneumophila (strain Paris).